We begin with the raw amino-acid sequence, 670 residues long: DNA ligase (670 aa).

NAD(+) contacts are provided by residues 35 to 39, 84 to 85, and glutamate 116; these read DSVYD and SL. Lysine 118 functions as the N6-AMP-lysine intermediate in the catalytic mechanism. Arginine 139, glutamate 176, lysine 293, and lysine 317 together coordinate NAD(+). Positions 411, 414, 429, and 435 each coordinate Zn(2+). Positions 592–670 constitute a BRCT domain; it reads VVKSEIAGKT…EEAFLKLLKS (79 aa).

It belongs to the NAD-dependent DNA ligase family. LigA subfamily. Mg(2+) serves as cofactor. The cofactor is Mn(2+).

The enzyme catalyses NAD(+) + (deoxyribonucleotide)n-3'-hydroxyl + 5'-phospho-(deoxyribonucleotide)m = (deoxyribonucleotide)n+m + AMP + beta-nicotinamide D-nucleotide.. In terms of biological role, DNA ligase that catalyzes the formation of phosphodiester linkages between 5'-phosphoryl and 3'-hydroxyl groups in double-stranded DNA using NAD as a coenzyme and as the energy source for the reaction. It is essential for DNA replication and repair of damaged DNA. The sequence is that of DNA ligase from Coxiella burnetii (strain Dugway 5J108-111).